The chain runs to 351 residues: Divinyl chlorophyll a/b light-harvesting protein PcbA (351 aa).

Transmembrane regions (helical) follow at residues 27-47 (FIAAHAAHTGLIAFWAGAFTL), 64-84 (LIALPHLATLGIGFDEAGTFV), 89-109 (VTAIAIVHLVLSMVYGAGGLL), 202-222 (VMGGHAFLAFFMITGGAFHIA), 242-262 (AILSWSLAGIGWMAIVAAFWC), and 305-325 (LTNVHYFLGFFYIQGHLWHAL).

The protein belongs to the PsbB/PsbC family. IsiA/Pcb subfamily. In terms of assembly, the antenna complex consists of divinyl chlorophylls (a and b) and divinyl chlorophyll a/b binding proteins and binds more divinyl chlorophyll b than does the antenna complex from high-light-adapted Prochlorococcus. Requires divinyl chlorophyll a as cofactor. Divinyl chlorophyll b is required as a cofactor.

The protein resides in the cellular thylakoid membrane. Its function is as follows. The antenna complex functions as a light receptor, it captures and delivers excitation energy to photosystems II and I. The Prochlorales pcb genes are not related to higher plant LHCs. This chain is Divinyl chlorophyll a/b light-harvesting protein PcbA (pcbA), found in Prochlorococcus marinus (strain SARG / CCMP1375 / SS120).